Reading from the N-terminus, the 144-residue chain is Maximins 7/H13 (144 aa).

The signal sequence occupies residues 1-18; the sequence is MNFKYIVAVSFLIASAYA. Residues 19–43 constitute a propeptide that is removed on maturation; it reads RSEENDEQSLSQRDVLEEESLREIR. The residue at position 70 (asparagine 70) is an Asparagine amide. A propeptide spanning residues 74–123 is cleaved from the precursor; it reads TAEDHEVMKRLEAVMRDLDSLDYPEEAAERETRGFNQEEIANLFTKKEKR. Leucine 143 carries the leucine amide modification.

It belongs to the bombinin family. Expressed by the skin glands.

The protein resides in the secreted. Functionally, maximin-7 shows antimicrobial activity against bacteria and against the fungus C.albicans. It has little hemolytic activity. In terms of biological role, maximin-H13 shows antimicrobial activity against bacteria and against the fungus C.albicans. Shows strong hemolytic activity. The protein is Maximins 7/H13 of Bombina maxima (Giant fire-bellied toad).